The primary structure comprises 333 residues: Protein-methionine-sulfoxide reductase catalytic subunit MsrP (333 aa).

Positions 1–43 form a signal peptide, tat-type signal; it reads MHKHRKPTEADVTPESLFYQRRRILKALGISAAALSLPFSAQA. Mo-molybdopterin is bound by residues asparagine 87, 90–91, cysteine 145, threonine 180, asparagine 232, arginine 237, and 248–250; these read YE and NIK.

The protein belongs to the MsrP family. In terms of assembly, heterodimer of a catalytic subunit (MsrP) and a heme-binding subunit (MsrQ). The cofactor is Mo-molybdopterin. Post-translationally, predicted to be exported by the Tat system. The position of the signal peptide cleavage has not been experimentally proven.

It localises to the periplasm. The enzyme catalyses L-methionyl-[protein] + a quinone + H2O = L-methionyl-(S)-S-oxide-[protein] + a quinol. It carries out the reaction L-methionyl-[protein] + a quinone + H2O = L-methionyl-(R)-S-oxide-[protein] + a quinol. Functionally, part of the MsrPQ system that repairs oxidized periplasmic proteins containing methionine sulfoxide residues (Met-O), using respiratory chain electrons. Thus protects these proteins from oxidative-stress damage caused by reactive species of oxygen and chlorine generated by the host defense mechanisms. MsrPQ is essential for the maintenance of envelope integrity under bleach stress, rescuing a wide series of structurally unrelated periplasmic proteins from methionine oxidation. The catalytic subunit MsrP is non-stereospecific, being able to reduce both (R-) and (S-) diastereoisomers of methionine sulfoxide. In Pectobacterium carotovorum subsp. carotovorum (strain PC1), this protein is Protein-methionine-sulfoxide reductase catalytic subunit MsrP.